The following is a 193-amino-acid chain: Large ribosomal subunit protein bL25 (193 aa).

Belongs to the bacterial ribosomal protein bL25 family. CTC subfamily. Part of the 50S ribosomal subunit; part of the 5S rRNA/L5/L18/L25 subcomplex. Contacts the 5S rRNA. Binds to the 5S rRNA independently of L5 and L18.

Its function is as follows. This is one of the proteins that binds to the 5S RNA in the ribosome where it forms part of the central protuberance. This is Large ribosomal subunit protein bL25 from Oleidesulfovibrio alaskensis (strain ATCC BAA-1058 / DSM 17464 / G20) (Desulfovibrio alaskensis).